Reading from the N-terminus, the 478-residue chain is Putative UDP-glucose flavonoid 3-O-glucosyltransferase 3 (478 aa).

Belongs to the UDP-glycosyltransferase family.

This Fragaria ananassa (Strawberry) protein is Putative UDP-glucose flavonoid 3-O-glucosyltransferase 3.